The following is a 220-amino-acid chain: ATP-dependent Clp protease proteolytic subunit (220 aa).

Serine 125 functions as the Nucleophile in the catalytic mechanism. The active site involves histidine 150.

It belongs to the peptidase S14 family. As to quaternary structure, fourteen ClpP subunits assemble into 2 heptameric rings which stack back to back to give a disk-like structure with a central cavity, resembling the structure of eukaryotic proteasomes.

It is found in the cytoplasm. It carries out the reaction Hydrolysis of proteins to small peptides in the presence of ATP and magnesium. alpha-casein is the usual test substrate. In the absence of ATP, only oligopeptides shorter than five residues are hydrolyzed (such as succinyl-Leu-Tyr-|-NHMec, and Leu-Tyr-Leu-|-Tyr-Trp, in which cleavage of the -Tyr-|-Leu- and -Tyr-|-Trp bonds also occurs).. Its function is as follows. Cleaves peptides in various proteins in a process that requires ATP hydrolysis. Has a chymotrypsin-like activity. Plays a major role in the degradation of misfolded proteins. The sequence is that of ATP-dependent Clp protease proteolytic subunit from Bacteroides fragilis (strain YCH46).